The primary structure comprises 103 residues: Histone H4, minor (103 aa).

Residues 1–12 (MAGGKGGKGMGK) are compositionally biased toward gly residues. Positions 1-29 (MAGGKGGKGMGKVGAKRHSRKSNKASIEG) are disordered. N6-acetyllysine occurs at positions 5, 8, 12, and 16. Basic residues predominate over residues 14 to 23 (GAKRHSRKSN). The DNA-binding element occupies 16–21 (KRHSRK).

The protein belongs to the histone H4 family. In terms of assembly, the nucleosome is a histone octamer containing two molecules each of H2A, H2B, H3 and H4 assembled in one H3-H4 heterotetramer and two H2A-H2B heterodimers. The octamer wraps approximately 147 bp of DNA.

It is found in the nucleus. The protein resides in the chromosome. Its function is as follows. Core component of nucleosome. Nucleosomes wrap and compact DNA into chromatin, limiting DNA accessibility to the cellular machineries which require DNA as a template. Histones thereby play a central role in transcription regulation, DNA repair, DNA replication and chromosomal stability. DNA accessibility is regulated via a complex set of post-translational modifications of histones, also called histone code, and nucleosome remodeling. In Tetrahymena pyriformis, this protein is Histone H4, minor.